Reading from the N-terminus, the 210-residue chain is Chaperone protein TorD (210 aa).

This sequence belongs to the TorD/DmsD family. TorD subfamily.

Its subcellular location is the cytoplasm. Functionally, involved in the biogenesis of TorA. Acts on TorA before the insertion of the molybdenum cofactor and, as a result, probably favors a conformation of the apoenzyme that is competent for acquiring the cofactor. The protein is Chaperone protein TorD of Salmonella newport (strain SL254).